We begin with the raw amino-acid sequence, 367 residues long: tRNA (guanine(26)-N(2))-dimethyltransferase (367 aa).

The Trm1 methyltransferase domain occupies 1-365 (MRVSEGRVTV…ADVVEIREAT (365 aa)). 5 residues coordinate S-adenosyl-L-methionine: arginine 34, arginine 64, aspartate 79, aspartate 105, and alanine 106. 4 residues coordinate Zn(2+): cysteine 234, cysteine 237, cysteine 254, and cysteine 257.

Belongs to the class I-like SAM-binding methyltransferase superfamily. Trm1 family.

It catalyses the reaction guanosine(26) in tRNA + 2 S-adenosyl-L-methionine = N(2)-dimethylguanosine(26) in tRNA + 2 S-adenosyl-L-homocysteine + 2 H(+). Dimethylates a single guanine residue at position 26 of a number of tRNAs using S-adenosyl-L-methionine as donor of the methyl groups. The polypeptide is tRNA (guanine(26)-N(2))-dimethyltransferase (Haloarcula marismortui (strain ATCC 43049 / DSM 3752 / JCM 8966 / VKM B-1809) (Halobacterium marismortui)).